Here is a 545-residue protein sequence, read N- to C-terminus: Lysine--tRNA ligase (545 aa).

Positions 33-41 (VSGLQHIGR) match the 'HIGH' region motif. A 'KMSKS' region motif is present at residues 288-292 (DMSSS).

The protein belongs to the class-I aminoacyl-tRNA synthetase family.

The protein localises to the cytoplasm. It catalyses the reaction tRNA(Lys) + L-lysine + ATP = L-lysyl-tRNA(Lys) + AMP + diphosphate. The sequence is that of Lysine--tRNA ligase (lysS) from Aeropyrum pernix (strain ATCC 700893 / DSM 11879 / JCM 9820 / NBRC 100138 / K1).